We begin with the raw amino-acid sequence, 235 residues long: Superoxide dismutase [Mn] 3.1, mitochondrial (235 aa).

The N-terminal 31 residues, 1-31, are a transit peptide targeting the mitochondrion; the sequence is MALRTLASKKVLSFPFGGAGRPLAAAASARG. The Mn(2+) site is built by H59, H107, D196, and H200.

This sequence belongs to the iron/manganese superoxide dismutase family. In terms of assembly, homotetramer. Requires Mn(2+) as cofactor.

It localises to the mitochondrion matrix. The catalysed reaction is 2 superoxide + 2 H(+) = H2O2 + O2. Its function is as follows. Destroys superoxide anion radicals which are normally produced within the cells and which are toxic to biological systems. The sequence is that of Superoxide dismutase [Mn] 3.1, mitochondrial (SODA.4) from Zea mays (Maize).